The following is a 393-amino-acid chain: CCA-adding enzyme (393 aa).

Residues G27 and R30 each contribute to the ATP site. Positions 27 and 30 each coordinate CTP. Positions 40 and 42 each coordinate Mg(2+). Residues R111, D154, R157, R160, and R163 each contribute to the ATP site. 5 residues coordinate CTP: R111, D154, R157, R160, and R163.

This sequence belongs to the tRNA nucleotidyltransferase/poly(A) polymerase family. Bacterial CCA-adding enzyme type 3 subfamily. As to quaternary structure, homodimer. Mg(2+) is required as a cofactor.

The enzyme catalyses a tRNA precursor + 2 CTP + ATP = a tRNA with a 3' CCA end + 3 diphosphate. It catalyses the reaction a tRNA with a 3' CCA end + 2 CTP + ATP = a tRNA with a 3' CCACCA end + 3 diphosphate. Catalyzes the addition and repair of the essential 3'-terminal CCA sequence in tRNAs without using a nucleic acid template. Adds these three nucleotides in the order of C, C, and A to the tRNA nucleotide-73, using CTP and ATP as substrates and producing inorganic pyrophosphate. tRNA 3'-terminal CCA addition is required both for tRNA processing and repair. Also involved in tRNA surveillance by mediating tandem CCA addition to generate a CCACCA at the 3' terminus of unstable tRNAs. While stable tRNAs receive only 3'-terminal CCA, unstable tRNAs are marked with CCACCA and rapidly degraded. The chain is CCA-adding enzyme from Listeria monocytogenes serotype 4a (strain HCC23).